Consider the following 983-residue polypeptide: MTISTTSSSTSSKTSSEKGDDLKGFSSSSSPASSRSSSATTPEPSSPTVLAAKTIESIDPFQPRKDYNENVLPAIPATEAVQPLTSDANTPDHWIARDERMIRLTGKHPFNSEAPLSELFSKGFLTPQNLFYVRSHGDTPRVTREQAENWKLKVHGLVEQEVELSIKDLKEKFPTVTLPITLVCAGNRRKEQNMVAKGLGFNWGAAGVSTGLFTGVYLADILDYCKPKNPLLSSFPSYDVAVPGRARHVVFEGADELPKGKYGTSQRLNWALDRCKGMLIAWGLNGEDLSPDHGYPLRLVVPGQIGGRMVKWLERIEVSDRESQHHLHFHDNKVLPTEVTADQARSEMHWWYDPKYIINDLNVNAAICSPDHDQVVNVAEPSTSSPQMLPLEGYAYTGGGRRIHRVEISLDDGHSWKCASIHYPEDLYRMYPIQGHEYFGTLDLSATEMSFSWCFWRLDVDVQADIIAKDVKVISVRALDEGLATMPRDMYWNATSMMNSWWFRVAVHREGENGNQIRFEHPTLAGNAPGGWMQRMNEAGLNPRYPQFGEAKAVESCKTDANTLAAAKEAKVDPKAIMIDPSKADTIITAADLAAHGDGEGPEPWFVVHGHVYDGTGFLKDHPGGDQSIRLVAGEDATEDFMAIHSMDAKKMLRDFHLGRLEKQDAAPPAATTEGEVLDLSKPFLDPKKWRATRLVSKQIISPDARIFRFALGSEDQELGLPVGQHVFVRVRSKNARTGETEMVQRAYTPYSGNTQRGFLDILIKVYFPSDAAATSAPAFEGGKMTMLLEKIDVSSPSDDLTIELKGPLGSFTYLGQQQIRWKPASAVRRVRKLAMIAGGSGITPIWSTLKAIADEVLDASNPSSPALDPIQIWIVYGNRTEQDILIREELERLRVALKGNLKVWHVLSNCTPENEANWSMGRGHITANVLRTHLPPPPAKPASEDELEDTLALVCGPPPMEKAVSDGLKQLGWDLQRCVVFF.

Low complexity-rich tracts occupy residues 1-14 (MTIS…SSKT) and 26-48 (SSSS…SSPT). The segment at 1–50 (MTISTTSSSTSSKTSSEKGDDLKGFSSSSSPASSRSSSATTPEPSSPTVL) is disordered. C184 contacts Mo-molybdopterin. Residues 585–662 (DTIITAADLA…LRDFHLGRLE (78 aa)) enclose the Cytochrome b5 heme-binding domain. The heme site is built by H622 and H645. The FAD-binding FR-type domain occupies 688–815 (KKWRATRLVS…KGPLGSFTYL (128 aa)). Residues 746–749 (RAYT), 763–767 (LIKVY), F768, F780, 784–786 (KMT), S841, and T844 each bind FAD. An NADP(+)-binding site is contributed by 952–961 (LALVCGPPPM).

Belongs to the nitrate reductase family. Homodimer. FAD is required as a cofactor. Requires heme as cofactor. The cofactor is Mo-molybdopterin.

The enzyme catalyses nitrite + NADP(+) + H2O = nitrate + NADPH + H(+). The protein operates within nitrogen metabolism; nitrate reduction (assimilation). Functionally, nitrate reductase is a key enzyme involved in the first step of nitrate assimilation in plants, fungi and bacteria. The chain is Nitrate reductase [NADPH] (NAR1) from Mycosarcoma maydis (Corn smut fungus).